A 420-amino-acid polypeptide reads, in one-letter code: 3-isopropylmalate dehydratase large subunit (420 aa).

3 residues coordinate [4Fe-4S] cluster: Cys300, Cys360, and Cys363.

Belongs to the aconitase/IPM isomerase family. LeuC type 2 subfamily. Heterodimer of LeuC and LeuD. It depends on [4Fe-4S] cluster as a cofactor.

It catalyses the reaction (2R,3S)-3-isopropylmalate = (2S)-2-isopropylmalate. It functions in the pathway amino-acid biosynthesis; L-leucine biosynthesis; L-leucine from 3-methyl-2-oxobutanoate: step 2/4. Catalyzes the isomerization between 2-isopropylmalate and 3-isopropylmalate, via the formation of 2-isopropylmaleate. The chain is 3-isopropylmalate dehydratase large subunit from Syntrophus aciditrophicus (strain SB).